A 286-amino-acid chain; its full sequence is Prohibitin-6, mitochondrial (286 aa).

Topologically, residues 1–12 (MNFKNVKVPKGP) are mitochondrial matrix. Residues 13 to 35 (GGGVIAAVVIGGLSLYGATHTLY) traverse the membrane as a helical; Signal-anchor for type II membrane protein segment. The Mitochondrial intermembrane segment spans residues 36-286 (NVDGGHRAIV…AMDLDVKPKK (251 aa)).

The protein belongs to the prohibitin family. As to quaternary structure, component of a prohibitin multimeric complex in mitochondrial membranes. Mostly expressed in proliferative tissues, including vasculature, shoot and root apical tissues.

It is found in the mitochondrion inner membrane. Prohibitin probably acts as a holdase/unfoldase for the stabilization of newly synthesized mitochondrial proteins. This Arabidopsis thaliana (Mouse-ear cress) protein is Prohibitin-6, mitochondrial (PHB6).